A 394-amino-acid polypeptide reads, in one-letter code: F-box/kelch-repeat protein At1g23390 (394 aa).

The F-box domain occupies 15–62; it reads EEESSIDGDILESILSYLPLLDLDSACQVSKSWNRAVFYSLRRLKTMP. Kelch repeat units follow at residues 65 to 111, 155 to 204, 206 to 252, and 321 to 369; these read FVYN…RSSH, SLII…TWLS, AVSS…SIGF, and MVYV…VIVA.

The chain is F-box/kelch-repeat protein At1g23390 from Arabidopsis thaliana (Mouse-ear cress).